A 219-amino-acid polypeptide reads, in one-letter code: UPF0073 inner membrane protein YqfA (219 aa).

The Cytoplasmic segment spans residues 1-23 (MVQKPLIKQGYSLAEEIANSVSH). Residues 24–44 (GIGLVFGIVGLVLLLVQAVDL) form a helical membrane-spanning segment. Topologically, residues 45-53 (NASATAITS) are periplasmic. A helical transmembrane segment spans residues 54-74 (YSLYGGSMILLFLASTLYHAI). The Cytoplasmic portion of the chain corresponds to 75 to 90 (PHQRAKMWLKKFDHCA). A helical membrane pass occupies residues 91–111 (IYLLIAGTYTPFLLVGLDSPL). The Periplasmic segment spans residues 112–113 (AR). Residues 114-134 (GLMIVIWSLALLGILFKLTIA) form a helical membrane-spanning segment. Residues 135–138 (HRFK) lie on the Cytoplasmic side of the membrane. Residues 139–159 (ILSLVTYLAMGWLSLVVIYEM) traverse the membrane as a helical segment. The Periplasmic segment spans residues 160–165 (AVKLAA). Residues 166-186 (GSVTLLAVGGVVYSLGVIFYV) form a helical membrane-spanning segment. The Cytoplasmic segment spans residues 187 to 195 (CKRIPYNHA). A helical transmembrane segment spans residues 196–216 (IWHGFVLGGSVCHFLAIYLYI). At 217-219 (GQA) the chain is on the periplasmic side.

This sequence belongs to the UPF0073 (Hly-III) family.

Its subcellular location is the cell inner membrane. In Escherichia coli O157:H7, this protein is UPF0073 inner membrane protein YqfA (yqfA).